The sequence spans 257 residues: General L-amino acid transport ATP-binding protein AapP (257 aa).

The ABC transporter domain occupies 18-252 (VEIVNMNKWY…PQHERTKLFL (235 aa)). 50–57 (GPSGSGKS) contacts ATP.

The protein belongs to the ABC transporter superfamily.

Its function is as follows. Part of a binding-protein-dependent transport system for L-amino acids, affects the uptake as well as the efflux of these amino acids. Probably responsible for energy coupling to the transport system. This is General L-amino acid transport ATP-binding protein AapP (aapP) from Rhizobium johnstonii (strain DSM 114642 / LMG 32736 / 3841) (Rhizobium leguminosarum bv. viciae).